The following is a 119-amino-acid chain: UPF0102 protein HI_1656 (119 aa).

Belongs to the UPF0102 family.

This Haemophilus influenzae (strain ATCC 51907 / DSM 11121 / KW20 / Rd) protein is UPF0102 protein HI_1656.